Here is a 412-residue protein sequence, read N- to C-terminus: BSD domain-containing protein 1 (412 aa).

A BSD domain is found at 145–197 (WLSTFSLEERKAEISELLVSSPAIRALYTKMVPAAVAHAEFWQRYFYKVFQLE). Positions 208 to 217 (QRAEQTDHSE) are enriched in basic and acidic residues. 3 disordered regions span residues 208 to 227 (QRAE…EDEE), 253 to 272 (VTVA…ASLS), and 298 to 412 (ESVT…ENWE). Composition is skewed to polar residues over residues 259–272 (PESS…ASLS) and 298–308 (ESVTIRVTQPS). Phosphoserine is present on serine 308. The segment covering 328 to 349 (PEERPAPREETAREDMAQDLRV) has biased composition (basic and acidic residues). Positions 353–372 (NSDSGKSTPSNNGKKGSSTD) are enriched in polar residues. 2 stretches are compositionally biased toward acidic residues: residues 373–390 (VSED…EEEV) and 400–412 (TEEL…ENWE).

The chain is BSD domain-containing protein 1 (bsdc1) from Danio rerio (Zebrafish).